The chain runs to 300 residues: uncharacterized protein (300 aa).

This is an uncharacterized protein from Bradyrhizobium diazoefficiens (strain JCM 10833 / BCRC 13528 / IAM 13628 / NBRC 14792 / USDA 110).